A 290-amino-acid polypeptide reads, in one-letter code: Pirin (290 aa).

Fe cation is bound by residues His-56, His-58, His-101, and Glu-103.

It belongs to the pirin family. May interact with NF1/CTF1. Interacts with BCL3. Identified in a complex comprised of PIR, BLC3, NFKB1 and target DNA. The cofactor is Fe cation. As to expression, highly expressed in a subset of melanomas. Detected at very low levels in most tissues (at protein level). Expressed in all tissues, with highest level of expression in heart and liver.

The protein resides in the nucleus. The protein localises to the cytoplasm. It catalyses the reaction quercetin + O2 = 2-(3,4-dihydroxybenzoyloxy)-4,6-dihydroxybenzoate + CO. The protein operates within flavonoid metabolism; quercetin degradation. Inhibited by kojic acid, sodium diethyldithiocarbamate and 1,10-phenanthroline monohydrochloride. Its function is as follows. Transcriptional coregulator of NF-kappa-B which facilitates binding of NF-kappa-B proteins to target kappa-B genes in a redox-state-dependent manner. May be required for efficient terminal myeloid maturation of hematopoietic cells. Has quercetin 2,3-dioxygenase activity (in vitro). This is Pirin (PIR) from Homo sapiens (Human).